Reading from the N-terminus, the 88-residue chain is MGDVLVTLKILPKDTDADIKSIEDQVKRNIEGLCSINRMDEVDIGFGLKYIKLEIIVQDKEGEIDRVENSISSIEGVGEISTENVSLI.

This sequence belongs to the EF-1-beta/EF-1-delta family.

Its function is as follows. Promotes the exchange of GDP for GTP in EF-1-alpha/GDP, thus allowing the regeneration of EF-1-alpha/GTP that could then be used to form the ternary complex EF-1-alpha/GTP/AAtRNA. In Thermoplasma acidophilum (strain ATCC 25905 / DSM 1728 / JCM 9062 / NBRC 15155 / AMRC-C165), this protein is Elongation factor 1-beta (ef1b).